The sequence spans 260 residues: Putative serine protease 45 (260 aa).

One can recognise a Peptidase S1 domain in the interval 1–234; that stretch reads MTRHWPWEVS…YTKWIKKQMS (234 aa). Cysteines 19 and 35 form a disulfide. Catalysis depends on H34, which acts as the Charge relay system. N55 is a glycosylation site (N-linked (GlcNAc...) asparagine). D82 functions as the Charge relay system in the catalytic mechanism. 3 disulfides stabilise this stretch: C116–C192, C151–C173, and C182–C210. The Charge relay system role is filled by S186.

Belongs to the peptidase S1 family.

In Homo sapiens (Human), this protein is Putative serine protease 45.